Consider the following 448-residue polypeptide: Trigger factor (448 aa).

The region spanning 172-257 (GDRVTVDFVG…MKKIEWPHLP (86 aa)) is the PPIase FKBP-type domain.

The protein belongs to the FKBP-type PPIase family. Tig subfamily.

Its subcellular location is the cytoplasm. It catalyses the reaction [protein]-peptidylproline (omega=180) = [protein]-peptidylproline (omega=0). Its function is as follows. Involved in protein export. Acts as a chaperone by maintaining the newly synthesized protein in an open conformation. Functions as a peptidyl-prolyl cis-trans isomerase. The protein is Trigger factor of Burkholderia ambifaria (strain ATCC BAA-244 / DSM 16087 / CCUG 44356 / LMG 19182 / AMMD) (Burkholderia cepacia (strain AMMD)).